The chain runs to 1048 residues: Putative structural protein ORF84 (1048 aa).

This sequence belongs to the ascovirus HvAV ORF146 family.

It localises to the virion. In Spodoptera frugiperda ascovirus 1a (SfAV-1a), this protein is Putative structural protein ORF84.